Here is a 407-residue protein sequence, read N- to C-terminus: Na(+)-translocating NADH-quinone reductase subunit F (407 aa).

Residues isoleucine 3–phenylalanine 23 traverse the membrane as a helical segment. Positions glycine 32–isoleucine 126 constitute a 2Fe-2S ferredoxin-type domain. 4 residues coordinate [2Fe-2S] cluster: cysteine 69, cysteine 75, cysteine 78, and cysteine 110. The region spanning valine 129–lysine 269 is the FAD-binding FR-type domain.

Belongs to the NqrF family. Composed of six subunits; NqrA, NqrB, NqrC, NqrD, NqrE and NqrF. The cofactor is [2Fe-2S] cluster. Requires FAD as cofactor.

The protein resides in the cell inner membrane. It carries out the reaction a ubiquinone + n Na(+)(in) + NADH + H(+) = a ubiquinol + n Na(+)(out) + NAD(+). In terms of biological role, NQR complex catalyzes the reduction of ubiquinone-1 to ubiquinol by two successive reactions, coupled with the transport of Na(+) ions from the cytoplasm to the periplasm. The first step is catalyzed by NqrF, which accepts electrons from NADH and reduces ubiquinone-1 to ubisemiquinone by a one-electron transfer pathway. The polypeptide is Na(+)-translocating NADH-quinone reductase subunit F (Serratia proteamaculans (strain 568)).